A 253-amino-acid chain; its full sequence is Acidic endochitinase pcht28 (253 aa).

The signal sequence occupies residues 1–24 (MKFNIVSPVALSCLFFLFLTGTLA). The Proton donor role is filled by E92. C212 and C244 are oxidised to a cystine.

It belongs to the glycosyl hydrolase 19 family. Chitinase class II subfamily.

It is found in the secreted. It localises to the extracellular space. The enzyme catalyses Random endo-hydrolysis of N-acetyl-beta-D-glucosaminide (1-&gt;4)-beta-linkages in chitin and chitodextrins.. Functionally, defense against chitin-containing fungal pathogens. The protein is Acidic endochitinase pcht28 of Solanum chilense (Tomato).